A 1046-amino-acid polypeptide reads, in one-letter code: Inner tegument protein (1046 aa).

Positions 543 to 1046 (WGIVPPDESN…TGRRANGDNA (504 aa)) are interaction with large tegument protein.

Belongs to the herpesviridae inner tegument protein family. As to quaternary structure, interacts (via C-terminus) with the large tegument protein/LTP (via N-terminus).

Its subcellular location is the virion tegument. It localises to the host cytoplasm. It is found in the host nucleus. The protein resides in the host Golgi apparatus. The protein localises to the host trans-Golgi network. Its function is as follows. Plays an essential role in cytoplasmic secondary envelopment during viral egress. Interacts with the capsid via the large tegument protein/LTP and participates in its transport to the host trans-Golgi network (TGN) where secondary envelopment occurs. Modulates tegumentation and capsid accumulation at the viral assembly complex. The polypeptide is Inner tegument protein (MDV050) (Gallid herpesvirus 2 (strain Chicken/Md5/ATCC VR-987) (GaHV-2)).